We begin with the raw amino-acid sequence, 382 residues long: F-box/kelch-repeat protein At3g16580 (382 aa).

The 47-residue stretch at 9 to 55 (WEFSLSLPWELIEEILSRVPPESLLRFKTVSKQWNALFRDKTFINNH) folds into the F-box domain. 2 Kelch repeats span residues 150-196 (KIFA…NIYT) and 334-381 (WIYV…AELQ).

This chain is F-box/kelch-repeat protein At3g16580, found in Arabidopsis thaliana (Mouse-ear cress).